Here is a 61-residue protein sequence, read N- to C-terminus: Large ribosomal subunit protein uL30 (61 aa).

It belongs to the universal ribosomal protein uL30 family. Part of the 50S ribosomal subunit.

This is Large ribosomal subunit protein uL30 from Lacticaseibacillus casei (strain BL23) (Lactobacillus casei).